The following is a 473-amino-acid chain: Photosystem II CP43 reaction center protein (473 aa).

Residues 1 to 14 constitute a propeptide that is removed on maturation; sequence MKNLYSLRRFYHVE. Residue Thr15 is modified to N-acetylthreonine. The residue at position 15 (Thr15) is a Phosphothreonine. A run of 5 helical transmembrane segments spans residues 69-93, 134-155, 178-200, 255-275, and 291-312; these read LFEV…PHLA, LIGP…KDKN, KARY…RVIT, KPFG…LSYS, and WFNN…ASQA. Glu367 contacts [CaMn4O5] cluster. The chain crosses the membrane as a helical span at residues 447–471; sequence RARAAAAGFEKGIDRDTEPTLFMRP.

This sequence belongs to the PsbB/PsbC family. PsbC subfamily. In terms of assembly, PSII is composed of 1 copy each of membrane proteins PsbA, PsbB, PsbC, PsbD, PsbE, PsbF, PsbH, PsbI, PsbJ, PsbK, PsbL, PsbM, PsbT, PsbX, PsbY, PsbZ, Psb30/Ycf12, at least 3 peripheral proteins of the oxygen-evolving complex and a large number of cofactors. It forms dimeric complexes. Binds multiple chlorophylls and provides some of the ligands for the Ca-4Mn-5O cluster of the oxygen-evolving complex. It may also provide a ligand for a Cl- that is required for oxygen evolution. PSII binds additional chlorophylls, carotenoids and specific lipids. serves as cofactor.

The protein localises to the plastid. It is found in the chloroplast thylakoid membrane. In terms of biological role, one of the components of the core complex of photosystem II (PSII). It binds chlorophyll and helps catalyze the primary light-induced photochemical processes of PSII. PSII is a light-driven water:plastoquinone oxidoreductase, using light energy to abstract electrons from H(2)O, generating O(2) and a proton gradient subsequently used for ATP formation. The sequence is that of Photosystem II CP43 reaction center protein from Nephroselmis olivacea (Green alga).